Reading from the N-terminus, the 174-residue chain is 3-hydroxyanthranilate 3,4-dioxygenase (174 aa).

Arginine 47 is a binding site for O2. Histidine 51, glutamate 57, and histidine 95 together coordinate Fe cation. A substrate-binding site is contributed by glutamate 57. Positions 99 and 110 each coordinate substrate. Residues cysteine 125, cysteine 128, cysteine 162, and cysteine 165 each contribute to the Fe cation site.

The protein belongs to the 3-HAO family. Homodimer. Fe(2+) serves as cofactor.

The enzyme catalyses 3-hydroxyanthranilate + O2 = (2Z,4Z)-2-amino-3-carboxymuconate 6-semialdehyde. The protein operates within cofactor biosynthesis; NAD(+) biosynthesis; quinolinate from L-kynurenine: step 3/3. Its activity is regulated as follows. Inhibited by 4-chloro-3-hydroxyanthranilate. Mechanism of inactivation involves the oxidation of the catalytic active site Fe(2+) to the catalytically inactive Fe(3+) oxidation state, superoxide production, and formation of two disulfide bonds between Cys-125 and Cys-128, and Cys-162 and Cys-165. Enzyme can be reactivated under reducing conditions. In terms of biological role, catalyzes the oxidative ring opening of 3-hydroxyanthranilate to 2-amino-3-carboxymuconate semialdehyde, which spontaneously cyclizes to quinolinate. This chain is 3-hydroxyanthranilate 3,4-dioxygenase, found in Cupriavidus metallidurans (strain ATCC 43123 / DSM 2839 / NBRC 102507 / CH34) (Ralstonia metallidurans).